The chain runs to 481 residues: Cysteine--tRNA ligase (481 aa).

Residue C29 participates in Zn(2+) binding. The 'HIGH' region signature appears at 31–41; it reads VTVYDHCHIGH. Residues C209, H234, and E238 each contribute to the Zn(2+) site. Positions 266–270 match the 'KMSKS' region motif; sequence KMSKS. K269 contacts ATP.

Belongs to the class-I aminoacyl-tRNA synthetase family. Monomer. Zn(2+) is required as a cofactor.

It localises to the cytoplasm. The catalysed reaction is tRNA(Cys) + L-cysteine + ATP = L-cysteinyl-tRNA(Cys) + AMP + diphosphate. The polypeptide is Cysteine--tRNA ligase (Geobacter sulfurreducens (strain ATCC 51573 / DSM 12127 / PCA)).